The sequence spans 504 residues: Lysine--tRNA ligase (504 aa).

Residues E404 and E411 each coordinate Mg(2+).

Belongs to the class-II aminoacyl-tRNA synthetase family. In terms of assembly, homodimer. Requires Mg(2+) as cofactor.

The protein localises to the cytoplasm. It carries out the reaction tRNA(Lys) + L-lysine + ATP = L-lysyl-tRNA(Lys) + AMP + diphosphate. The chain is Lysine--tRNA ligase from Aliarcobacter butzleri (strain RM4018) (Arcobacter butzleri).